We begin with the raw amino-acid sequence, 150 residues long: Anthrone oxygenase gedH (150 aa).

A run of 4 helical transmembrane segments spans residues 1–21 (MANP…PVFL), 41–61 (GHKL…WVAA), 73–93 (PVLA…CMVS), and 128–148 (LFPL…LVGG).

Belongs to the anthrone oxygenase family.

The protein localises to the membrane. It carries out the reaction emodin anthrone + O2 = emodin + H2O + H(+). The protein operates within secondary metabolite biosynthesis. In terms of biological role, anthrone oxygenase; part of the gene cluster that mediates the biosynthesis of geodin, an intermediate in the biosynthesis of other natural products. The pathway begins with the synthesis of atrochrysone thioester by the polyketide synthase (PKS) gedC. The atrochrysone carboxyl ACP thioesterase gedB then breaks the thioester bond and releases the atrochrysone carboxylic acid from gedC. The atrochrysone carboxylic acid is then converted to atrochrysone which is further transformed into emodin anthrone. The next step is performed by the emodin anthrone oxygenase gedH that catalyzes the oxidation of emodinanthrone to emodin. Emodin O-methyltransferase encoded probably by gedA then catalyzes methylation of the 8-hydroxy group of emodin to form questin. Ring cleavage of questin by questin oxidase gedK leads to desmethylsulochrin via several intermediates including questin epoxide. Another methylation step probably catalyzed by methyltransferase gedG leads to the formation of sulochrin which is further converted to dihydrogeodin by the sulochrin halogenase gedL. Finally, the dihydrogeodin oxidase gedJ catalyzes the stereospecific phenol oxidative coupling reaction converting dihydrogeodin to geodin. The sequence is that of Anthrone oxygenase gedH from Aspergillus terreus (strain NIH 2624 / FGSC A1156).